A 288-amino-acid chain; its full sequence is Transmembrane protein 163 (288 aa).

The disordered stretch occupies residues 1–64 (MEPALGSERR…ESGQFSDGLE (64 aa)). At 1 to 87 (MEPALGSERR…HEAQNYRKKA (87 aa)) the chain is on the cytoplasmic side. S11 carries the post-translational modification Phosphoserine. Pro residues predominate over residues 12 to 24 (PPGPGVPRPPPRG). Low complexity predominate over residues 25-42 (HAPSTAAPAPSPAPMSSS). The required for interaction with MCOLN1 stretch occupies residues 41-71 (SSVQSDEERQPRISESGQFSDGLEDRGLLES). 4 positions are modified to phosphoserine: S45, S54, S56, and S60. The chain crosses the membrane as a helical span at residues 88-108 (LWVSWLSIIVTLALAVAAFTV). Over 109 to 115 (SVMRYSA) the chain is Extracellular. Residues 116 to 136 (SAFGFAFDAILDVLSSAIVLW) form a helical membrane-spanning segment. The Cytoplasmic portion of the chain corresponds to 137 to 149 (RYSNAAAVHSANR). The chain crosses the membrane as a helical span at residues 150 to 170 (EYIACVILGVIFLLSSICIVV). Topologically, residues 171–186 (KAIHDLSTRLLPEVDD) are extracellular. Residues 187–207 (FLFSVSILSGILCSVLAVLKF) form a helical membrane-spanning segment. The Cytoplasmic portion of the chain corresponds to 208-216 (MLGKVLTSR). Residues 217 to 237 (ALITDGFNSLVGGVMGFSILL) form a helical membrane-spanning segment. Over 238–254 (SAEVFKHNAAVWYLDGS) the chain is Extracellular. The chain crosses the membrane as a helical span at residues 255 to 275 (IGVLIGLTIFAYGVKLLIDMV). The Cytoplasmic portion of the chain corresponds to 276-288 (PRVRQTRHYEMFE).

Belongs to the TMEM163 family. As to quaternary structure, homodimer. Interacts with MCOLN1. Interacts with SLC30A1, SLC30A2, SLC30A3 and SLC30A4. Widely expressed, with high expression in the brain, cerebellum, heart, lung and spleen. In the brain, mainly expressed in the glutaminergic neuron subpopulations.

The protein localises to the cytoplasmic vesicle. It localises to the secretory vesicle. Its subcellular location is the synaptic vesicle membrane. The protein resides in the early endosome membrane. It is found in the late endosome membrane. The protein localises to the lysosome membrane. It localises to the cell membrane. It catalyses the reaction Zn(2+)(in) = Zn(2+)(out). In terms of biological role, zinc ion transporter that mediates zinc efflux and plays a crucial role in intracellular zinc homeostasis. Binds the divalent cations Zn(2+), Ni(2+), and to a minor extent Cu(2+). Is a functional modulator of P2X purinoceptors, including P2RX1, P2RX3, P2RX4 and P2RX7. Plays a role in central nervous system development and is required for myelination, and survival and proliferation of oligodendrocytes. This chain is Transmembrane protein 163 (Tmem163), found in Mus musculus (Mouse).